The chain runs to 130 residues: MVRMNVLADALKCINNAEKRGKRQVLLRPCSKVIIKFLTVMMKHGYIGEFEIVEDHRAGKIVVNLTGRLNKCGVISPRFDAPINDIEKWTNNLLPSRQFGYVVLTTSGGIMDHEEARRKHLGGKILGFFF.

It belongs to the universal ribosomal protein uS8 family.

The chain is Small ribosomal subunit protein uS8B (RpS15Ab) from Drosophila melanogaster (Fruit fly).